The primary structure comprises 263 residues: Shikimate dehydrogenase (NADP(+)) (263 aa).

Residues 16-18 and T65 each bind shikimate; that span reads SKS. K69 acts as the Proton acceptor in catalysis. The shikimate site is built by N90 and D105. NADP(+) contacts are provided by residues 125–129 and L208; that span reads GSGGS. Y210 provides a ligand contact to shikimate. Residue G230 participates in NADP(+) binding.

This sequence belongs to the shikimate dehydrogenase family. In terms of assembly, homodimer.

The catalysed reaction is shikimate + NADP(+) = 3-dehydroshikimate + NADPH + H(+). The protein operates within metabolic intermediate biosynthesis; chorismate biosynthesis; chorismate from D-erythrose 4-phosphate and phosphoenolpyruvate: step 4/7. Its activity is regulated as follows. Inhibited by curcumin, 3-(2-naphthyloxy)-4-oxo-2-(trifluoromethyl)-4H-chromen-7-yl 3-chlorobenzoate, butyl 2-{[3-(2-naphthyloxy)-4-oxo-2-(trifluoromethyl)-4H-chromen-7-yl]oxy}propanoate, 2-({2-[(2-{[2-(2,3-dimethylanilino)-2-oxoethyl]sulfanyl}-1,3-benzothiazol-6-yl)amino]-2-oxoethyl}sulfanyl)-N-(2-naphthyl)acetamide, and maesaquinone diacetate. Functionally, involved in the biosynthesis of the chorismate, which leads to the biosynthesis of aromatic amino acids. Catalyzes the reversible NADPH linked reduction of 3-dehydroshikimate (DHSA) to yield shikimate (SA). It can also use NAD to oxidize shikimate. The polypeptide is Shikimate dehydrogenase (NADP(+)) (Helicobacter pylori (Campylobacter pylori)).